Here is a 101-residue protein sequence, read N- to C-terminus: Small ribosomal subunit protein uS10 (101 aa).

Belongs to the universal ribosomal protein uS10 family. As to quaternary structure, part of the 30S ribosomal subunit.

Functionally, involved in the binding of tRNA to the ribosomes. This is Small ribosomal subunit protein uS10 from Mycobacterium leprae (strain Br4923).